The sequence spans 398 residues: 1-deoxy-D-xylulose 5-phosphate reductoisomerase (398 aa).

Residues Thr10, Gly11, Ser12, Ile13, Asn38, and Asn124 each coordinate NADPH. Lys125 contacts 1-deoxy-D-xylulose 5-phosphate. Glu126 serves as a coordination point for NADPH. Asp150 contributes to the Mn(2+) binding site. 4 residues coordinate 1-deoxy-D-xylulose 5-phosphate: Ser151, Glu152, Ser186, and His209. A Mn(2+)-binding site is contributed by Glu152. Position 215 (Gly215) interacts with NADPH. The 1-deoxy-D-xylulose 5-phosphate site is built by Ser222, Asn227, Lys228, and Glu231. Glu231 provides a ligand contact to Mn(2+).

It belongs to the DXR family. The cofactor is Mg(2+). Mn(2+) serves as cofactor.

The enzyme catalyses 2-C-methyl-D-erythritol 4-phosphate + NADP(+) = 1-deoxy-D-xylulose 5-phosphate + NADPH + H(+). It participates in isoprenoid biosynthesis; isopentenyl diphosphate biosynthesis via DXP pathway; isopentenyl diphosphate from 1-deoxy-D-xylulose 5-phosphate: step 1/6. Its function is as follows. Catalyzes the NADPH-dependent rearrangement and reduction of 1-deoxy-D-xylulose-5-phosphate (DXP) to 2-C-methyl-D-erythritol 4-phosphate (MEP). The polypeptide is 1-deoxy-D-xylulose 5-phosphate reductoisomerase (Baumannia cicadellinicola subsp. Homalodisca coagulata).